A 232-amino-acid chain; its full sequence is Cobalt transport protein CbiM (232 aa).

A run of 6 helical transmembrane segments spans residues 6 to 26 (GFLPPAHAIAWGVASAPFVVH), 43 to 63 (LLLGASGAFTFVLSALKLPSV), 84 to 104 (IMAVLGTITLLFQALLLAHGG), 107 to 127 (TLGANVFSMAIVGPWAGYGVY), 135 to 155 (VPLMVTVFFGAFVADLSTYCV), and 181 to 201 (IFAVTQIPLAVSEGLLTVIVM).

Belongs to the CbiM family. In terms of assembly, forms an energy-coupling factor (ECF) transporter complex composed of an ATP-binding protein (A component, CbiO), a transmembrane protein (T component, CbiQ) and 2 possible substrate-capture proteins (S components, CbiM and CbiN) of unknown stoichimetry.

The protein resides in the cell membrane. It functions in the pathway cofactor biosynthesis; adenosylcobalamin biosynthesis. Its function is as follows. Part of the energy-coupling factor (ECF) transporter complex CbiMNOQ involved in cobalt import. This is Cobalt transport protein CbiM from Streptomyces coelicolor (strain ATCC BAA-471 / A3(2) / M145).